Here is a 1483-residue protein sequence, read N- to C-terminus: Heme-responsive zinc finger transcription factor HAP1 (1483 aa).

Positions 1 to 50 (MSNTPYNSSVPSIASMTQSSVSRSPNMHTATTPGANTSSNSPPLHMSSDS) are enriched in polar residues. Positions 1–56 (MSNTPYNSSVPSIASMTQSSVSRSPNMHTATTPGANTSSNSPPLHMSSDSSKIKRK) are disordered. Zn(2+)-binding residues include C64, C67, C74, C81, C84, and C93. Positions 64-93 (CTICRKRKVKCDKLRPHCQQCTKTGVAHLC) form a DNA-binding region, zn(2)-C6 fungal-type. Residues 105–134 (EKELLKDNELKKLRERVKSLEKTLSKVHSS) adopt a coiled-coil conformation. Positions 162–176 (VNANTGSASSASHMH) are enriched in polar residues. Residues 162–208 (VNANTGSASSASHMHQQQQQQQQQEQQQDFSRSANANANSSSLSISN) are disordered. Residues 177-208 (QQQQQQQQQEQQQDFSRSANANANSSSLSISN) show a composition bias toward low complexity. Positions 244 to 444 (KGDPYLKLLW…NTIPHHQPQS (201 aa)) are heme-responsive; required for HMC formation. 6 HRM repeats span residues 280 to 285 (KCPINH), 299 to 304 (KCPVDH), 323 to 328 (KCPVDH), 347 to 352 (RCPVDH), 389 to 394 (KCPVDH), and 415 to 420 (RCPIDH). Polar residues-rich tracts occupy residues 432–447 (STHN…SGSH) and 706–734 (QLNA…NPTL). Disordered regions lie at residues 432–458 (STHN…NRKH) and 706–767 (QLNA…KENQ). Residues 735–759 (NNNMSAATTNSSSRSGSADSRSGSN) are compositionally biased toward low complexity. The HRM 7 repeat unit spans residues 1192-1197 (KCPVYQ). The segment at 1384-1411 (TANTDTSANGSALSTLTSPQGSDLASNS) is disordered. Over residues 1388–1411 (DTSANGSALSTLTSPQGSDLASNS) the composition is skewed to polar residues.

As to quaternary structure, binds DNA as a homodimer. Interacts with SRO9 and YDJ1. In the absence of heme, binds to at least four cellular proteins, including YDJ1 and SRO9, forming a high-molecular-weight complex (HMC) which results in repression of its activity and dictates its DNA-binding specificity.

Its subcellular location is the nucleus. Regulation of oxygen dependent gene expression. It modulates the expression of Iso-1 (CYP1) and Iso-2 (CYP3) cytochrome c. In response to heme, promotes transcription of genes encoding functions required for respiration, controlling oxidative damage and repression of anaerobic genes. Binds to the sequence 5'-CGGNNNTNNCGG-3'. This is Heme-responsive zinc finger transcription factor HAP1 (HAP1) from Saccharomyces cerevisiae (strain RM11-1a) (Baker's yeast).